A 155-amino-acid chain; its full sequence is Ribosome maturation factor RimP (155 aa).

This sequence belongs to the RimP family.

The protein localises to the cytoplasm. Its function is as follows. Required for maturation of 30S ribosomal subunits. The chain is Ribosome maturation factor RimP from Synechococcus sp. (strain CC9605).